A 1001-amino-acid chain; its full sequence is Translation initiation factor IF-2 (1001 aa).

A disordered region spans residues 34–404 (KSHSSTISES…SRGDRRDRKE (371 aa)). The segment covering 67–80 (SRPESKEDKSDPKQ) has biased composition (basic and acidic residues). Composition is skewed to pro residues over residues 98–107 (PARPTPPPRP), 147–157 (PTQPLAPPPVP), and 163–172 (PSKPAPPTPP). Over residues 173 to 190 (AKKAAPAPRLAGPPGRTA) the composition is skewed to low complexity. Composition is skewed to basic and acidic residues over residues 212-230 (SLKD…EEKV) and 238-252 (PKPK…PPRP). The segment covering 332–342 (DDDDDDLDIDG) has biased composition (acidic residues). 2 stretches are compositionally biased toward low complexity: residues 362 to 371 (KSLAAKPSTP) and 385 to 394 (AGSSAGGSSR). Residues 395–404 (SRGDRRDRKE) are compositionally biased toward basic and acidic residues. A tr-type G domain is found at 493 to 666 (RRPPVVTIMG…LLVSEVEELV (174 aa)). Residues 502 to 509 (GHVDHGKT) are G1. 502-509 (GHVDHGKT) lines the GTP pocket. Residues 527-531 (GITQH) are G2. Residues 552–555 (DTPG) form a G3 region. GTP-binding positions include 552–556 (DTPGH) and 606–609 (NKVD). The tract at residues 606 to 609 (NKVD) is G4. A G5 region spans residues 642–644 (SAL).

Belongs to the TRAFAC class translation factor GTPase superfamily. Classic translation factor GTPase family. IF-2 subfamily.

It localises to the cytoplasm. In terms of biological role, one of the essential components for the initiation of protein synthesis. Protects formylmethionyl-tRNA from spontaneous hydrolysis and promotes its binding to the 30S ribosomal subunits. Also involved in the hydrolysis of GTP during the formation of the 70S ribosomal complex. The chain is Translation initiation factor IF-2 (infB) from Synechocystis sp. (strain ATCC 27184 / PCC 6803 / Kazusa).